The chain runs to 398 residues: Homeobox protein knotted-1-like 1 (398 aa).

3 disordered regions span residues 43-69, 172-192, and 234-277; these read TFHLQSSGGGGGGGSGDQCNFQSPGTH, EFEARQRSSGTSRETSKDPEL, and NNNA…PRAE. The segment covering 49–58 has biased composition (gly residues); the sequence is SGGGGGGGSG. The ELK domain maps to 280–300; the sequence is ELKNHLLRKYSGYLSSLKQEL. Residues 301 to 364 constitute a DNA-binding region (homeobox; TALE-type); the sequence is SKKKKKGKLP…NQRKRHWKPS (64 aa).

The protein belongs to the TALE/KNOX homeobox family. As to expression, expressed only in the stems.

The protein resides in the nucleus. Functionally, probably binds to the DNA sequence 5'-TGAC-3'. The polypeptide is Homeobox protein knotted-1-like 1 (Malus domestica (Apple)).